The following is a 448-amino-acid chain: Phosphoglucosamine mutase (448 aa).

Ser-100 functions as the Phosphoserine intermediate in the catalytic mechanism. Mg(2+) is bound by residues Ser-100, Asp-240, Asp-242, and Asp-244. Ser-100 is modified (phosphoserine).

The protein belongs to the phosphohexose mutase family. Requires Mg(2+) as cofactor. Post-translationally, activated by phosphorylation.

It carries out the reaction alpha-D-glucosamine 1-phosphate = D-glucosamine 6-phosphate. Its function is as follows. Catalyzes the conversion of glucosamine-6-phosphate to glucosamine-1-phosphate. The protein is Phosphoglucosamine mutase of Clostridium beijerinckii (strain ATCC 51743 / NCIMB 8052) (Clostridium acetobutylicum).